A 90-amino-acid chain; its full sequence is DNA-binding protein HU-alpha (90 aa).

It belongs to the bacterial histone-like protein family. Heterodimer of an alpha and a beta chain.

Histone-like DNA-binding protein which is capable of wrapping DNA to stabilize it, and thus to prevent its denaturation under extreme environmental conditions. The chain is DNA-binding protein HU-alpha (hupA) from Vibrio cholerae serotype O1 (strain ATCC 39315 / El Tor Inaba N16961).